The sequence spans 455 residues: Bifunctional protein GlmU (455 aa).

The pyrophosphorylase stretch occupies residues 1–226 (MGLSVVILAA…EFEILGVNDR (226 aa)). UDP-N-acetyl-alpha-D-glucosamine contacts are provided by residues 8 to 11 (LAAG), Lys-22, Gln-73, 78 to 79 (GT), 99 to 101 (YGD), Gly-136, Glu-151, Asn-166, and Asn-224. Asp-101 lines the Mg(2+) pocket. A Mg(2+)-binding site is contributed by Asn-224. Residues 227 to 247 (TQLASLERVWQRNVAEKIMAK) form a linker region. The interval 248–455 (GVSIADPNRF…WQRSVKKTDK (208 aa)) is N-acetyltransferase. Arg-330 and Lys-348 together coordinate UDP-N-acetyl-alpha-D-glucosamine. His-360 serves as the catalytic Proton acceptor. UDP-N-acetyl-alpha-D-glucosamine contacts are provided by Tyr-363 and Asn-374. Acetyl-CoA is bound by residues Ala-377, 383–384 (NY), Ser-402, Ala-420, and Arg-437.

It in the N-terminal section; belongs to the N-acetylglucosamine-1-phosphate uridyltransferase family. In the C-terminal section; belongs to the transferase hexapeptide repeat family. As to quaternary structure, homotrimer. It depends on Mg(2+) as a cofactor.

The protein resides in the cytoplasm. It carries out the reaction alpha-D-glucosamine 1-phosphate + acetyl-CoA = N-acetyl-alpha-D-glucosamine 1-phosphate + CoA + H(+). It catalyses the reaction N-acetyl-alpha-D-glucosamine 1-phosphate + UTP + H(+) = UDP-N-acetyl-alpha-D-glucosamine + diphosphate. It functions in the pathway nucleotide-sugar biosynthesis; UDP-N-acetyl-alpha-D-glucosamine biosynthesis; N-acetyl-alpha-D-glucosamine 1-phosphate from alpha-D-glucosamine 6-phosphate (route II): step 2/2. Its pathway is nucleotide-sugar biosynthesis; UDP-N-acetyl-alpha-D-glucosamine biosynthesis; UDP-N-acetyl-alpha-D-glucosamine from N-acetyl-alpha-D-glucosamine 1-phosphate: step 1/1. The protein operates within bacterial outer membrane biogenesis; LPS lipid A biosynthesis. Functionally, catalyzes the last two sequential reactions in the de novo biosynthetic pathway for UDP-N-acetylglucosamine (UDP-GlcNAc). The C-terminal domain catalyzes the transfer of acetyl group from acetyl coenzyme A to glucosamine-1-phosphate (GlcN-1-P) to produce N-acetylglucosamine-1-phosphate (GlcNAc-1-P), which is converted into UDP-GlcNAc by the transfer of uridine 5-monophosphate (from uridine 5-triphosphate), a reaction catalyzed by the N-terminal domain. The chain is Bifunctional protein GlmU from Francisella tularensis subsp. tularensis (strain FSC 198).